We begin with the raw amino-acid sequence, 859 residues long: Photoactivated adenylate cyclase subunit beta-like protein ST- (859 aa).

Positions 56–149 (LRRLMYLSKS…GRMYGDWHMK (94 aa)) constitute a BLUF 1 domain. The disordered stretch occupies residues 420-444 (RPPIFDDTPKSNPRPRTPGYGGRQR). The BLUF 2 domain maps to 471 to 563 (LTTLTYISQA…RVYTSEWTLT (93 aa)). The interval 814 to 859 (ARSGEQPLTEPEQAKPDFRVSPGRDRHGVSGRRSNSSQGKGSIQVG) is disordered. Over residues 825-841 (EQAKPDFRVSPGRDRHG) the composition is skewed to basic and acidic residues. The segment covering 845-859 (RRSNSSQGKGSIQVG) has biased composition (polar residues).

In terms of assembly, heterotetramer of two alpha and two beta subunits.

The protein localises to the cell projection. It is found in the cilium. It localises to the flagellum. The chain is Photoactivated adenylate cyclase subunit beta-like protein ST- from Euglena gracilis.